Here is a 230-residue protein sequence, read N- to C-terminus: Protein CbbY (230 aa).

The Nucleophile role is filled by Asp8. Positions 8 and 10 each coordinate Mg(2+). Asp8 provides a ligand contact to substrate. Asp10 acts as the Proton donor in catalysis. Substrate is bound by residues Glu17, 50 to 54 (GGKER), 75 to 78 (HRAK), and 115 to 121 (TTTSLPN). Asp176 serves as a coordination point for Mg(2+).

The protein belongs to the HAD-like hydrolase superfamily. CbbY/CbbZ/Gph/YieH family. Mg(2+) serves as cofactor.

It catalyses the reaction D-xylulose 1,5-bisphosphate + H2O = D-xylulose 5-phosphate + phosphate. In terms of biological role, highly selective xylulose-1,5-bisphosphate (XuBP) phosphatase. Also shows activity towards ribulose-1,5-bisphosphate (RuBP) and fructose-1,6-bisphosphate (FBP), but not towards fructose-6-phosphate (F6P) or ribulose-5-phosphate (Ru5P). Degrades xylulose-1,5-bisphosphate, a potent inhibitor of rubisco produced by the rubisco itself. This is Protein CbbY from Cereibacter sphaeroides (Rhodobacter sphaeroides).